A 372-amino-acid chain; its full sequence is sn-glycerol-3-phosphate import ATP-binding protein UgpC (372 aa).

Residues 2-233 (LDIKQLVKTY…PASTFVASFI (232 aa)) enclose the ABC transporter domain. Residue 35-42 (GPSGCGKS) coordinates ATP.

The protein belongs to the ABC transporter superfamily. sn-glycerol-3-phosphate importer (TC 3.A.1.1.3) family. In terms of assembly, the complex is composed of two ATP-binding proteins (UgpC), two transmembrane proteins (UgpA and UgpE) and a solute-binding protein (UgpB).

It is found in the cell inner membrane. It catalyses the reaction sn-glycerol 3-phosphate(out) + ATP + H2O = sn-glycerol 3-phosphate(in) + ADP + phosphate + H(+). In terms of biological role, part of the ABC transporter complex UgpBAEC involved in sn-glycerol-3-phosphate (G3P) import. Responsible for energy coupling to the transport system. The sequence is that of sn-glycerol-3-phosphate import ATP-binding protein UgpC from Vibrio cholerae serotype O1 (strain ATCC 39315 / El Tor Inaba N16961).